The following is a 349-amino-acid chain: Isopentenyl-diphosphate delta-isomerase (349 aa).

Residue 6–7 (RK) participates in substrate binding. Residues 62 to 64 (AMT), Ser-93, and Asn-122 each bind FMN. Gln-152 lines the substrate pocket. Glu-153 is a Mg(2+) binding site. Residues Lys-184, Thr-214, 258–259 (GG), and 280–281 (AG) each bind FMN.

This sequence belongs to the IPP isomerase type 2 family. Homooctamer. Dimer of tetramers. FMN is required as a cofactor. Requires NADPH as cofactor. Mg(2+) serves as cofactor.

The protein localises to the cytoplasm. It carries out the reaction isopentenyl diphosphate = dimethylallyl diphosphate. Functionally, involved in the biosynthesis of isoprenoids. Catalyzes the 1,3-allylic rearrangement of the homoallylic substrate isopentenyl (IPP) to its allylic isomer, dimethylallyl diphosphate (DMAPP). The protein is Isopentenyl-diphosphate delta-isomerase of Bacillus cereus (strain ZK / E33L).